Here is a 539-residue protein sequence, read N- to C-terminus: O-phosphoserine--tRNA(Cys) ligase (539 aa).

Residues 188-190 (HMT), 233-235 (SAS), 275-276 (YY), and asparagine 327 contribute to the substrate site.

Belongs to the class-II aminoacyl-tRNA synthetase family. O-phosphoseryl-tRNA(Cys) synthetase subfamily. In terms of assembly, homotetramer. Interacts with SepCysS.

The enzyme catalyses tRNA(Cys) + O-phospho-L-serine + ATP = O-phospho-L-seryl-tRNA(Cys) + AMP + diphosphate. Its function is as follows. Catalyzes the attachment of O-phosphoserine (Sep) to tRNA(Cys). The protein is O-phosphoserine--tRNA(Cys) ligase of Methanosarcina mazei (strain ATCC BAA-159 / DSM 3647 / Goe1 / Go1 / JCM 11833 / OCM 88) (Methanosarcina frisia).